A 158-amino-acid chain; its full sequence is UPF0262 protein RHOS4_22360 (158 aa).

It belongs to the UPF0262 family.

The chain is UPF0262 protein RHOS4_22360 from Cereibacter sphaeroides (strain ATCC 17023 / DSM 158 / JCM 6121 / CCUG 31486 / LMG 2827 / NBRC 12203 / NCIMB 8253 / ATH 2.4.1.) (Rhodobacter sphaeroides).